The primary structure comprises 254 residues: 5-oxoprolinase subunit A (254 aa).

It belongs to the LamB/PxpA family. As to quaternary structure, forms a complex composed of PxpA, PxpB and PxpC.

It catalyses the reaction 5-oxo-L-proline + ATP + 2 H2O = L-glutamate + ADP + phosphate + H(+). Functionally, catalyzes the cleavage of 5-oxoproline to form L-glutamate coupled to the hydrolysis of ATP to ADP and inorganic phosphate. The chain is 5-oxoprolinase subunit A from Burkholderia vietnamiensis (strain G4 / LMG 22486) (Burkholderia cepacia (strain R1808)).